Here is a 486-residue protein sequence, read N- to C-terminus: MLRRALRLRLGPCLSGRGLGTYRRGSTLDWDGKVSEIKKKIQSIFPGGAWNPLYDTSHLPPERSDVVIVGGGVLGLSVAYWLKRLEKQQGAIRVLVVERDHTYARASTVLSVGGIRQQFSLPQNVQLSLFSAEFLRNINEYLAVVDDPPLDLQFNPSGYLLLASEEGAAIMERNVKMQRQEGAKVCLMSPEQLQKKFPWINTEGVALASYGLENEGWFDPWCLLQGLRRKLQSMGVLFCQGEVTRFISSSSHMETASGEQLTLKRIHEVHVKMDHSQEFQPVECAIVVNAAGAWSGQIAELAGVGNGPPGTMQGTKLPVEPRKRYVYLWHCPQGPGLEAPLVADPSGAYFRREGLGNNYVGSCSPTEEEEPDPGNLEVDYDFFQEKVWPRLAQRVPAFETLKVRSAWAGYYDYNTFDQNGVVGPHPLVVNMYFATGFSGHGLQQAPAVGRAVAEMVLEGHFQTINLSPFLFSRFYFGEKAQEHCIL.

A helical membrane pass occupies residues 66 to 82; sequence VVIVGGGVLGLSVAYWL.

As to quaternary structure, associates with components of the mitochondrial respiratory chain complex I. Requires FAD as cofactor.

It localises to the mitochondrion inner membrane. In terms of biological role, required for the assembly of the mitochondrial membrane respiratory chain NADH dehydrogenase (Complex I). Involved in mid-late stages of complex I assembly. This Bos taurus (Bovine) protein is FAD-dependent oxidoreductase domain-containing protein 1 (FOXRED1).